Reading from the N-terminus, the 429-residue chain is UPF0597 protein AHA_1619 (429 aa).

Belongs to the UPF0597 family.

This Aeromonas hydrophila subsp. hydrophila (strain ATCC 7966 / DSM 30187 / BCRC 13018 / CCUG 14551 / JCM 1027 / KCTC 2358 / NCIMB 9240 / NCTC 8049) protein is UPF0597 protein AHA_1619.